A 366-amino-acid polypeptide reads, in one-letter code: Ribosomal RNA large subunit methyltransferase M (366 aa).

S-adenosyl-L-methionine is bound by residues Ser188, 221–224 (CPGG), Asp240, Asp260, and Asp277. The active-site Proton acceptor is the Lys306.

This sequence belongs to the class I-like SAM-binding methyltransferase superfamily. RNA methyltransferase RlmE family. RlmM subfamily. Monomer.

The protein resides in the cytoplasm. The catalysed reaction is cytidine(2498) in 23S rRNA + S-adenosyl-L-methionine = 2'-O-methylcytidine(2498) in 23S rRNA + S-adenosyl-L-homocysteine + H(+). Functionally, catalyzes the 2'-O-methylation at nucleotide C2498 in 23S rRNA. This chain is Ribosomal RNA large subunit methyltransferase M, found in Salmonella agona (strain SL483).